The following is a 104-amino-acid chain: Large ribosomal subunit protein uL24 (104 aa).

It belongs to the universal ribosomal protein uL24 family. Part of the 50S ribosomal subunit.

One of two assembly initiator proteins, it binds directly to the 5'-end of the 23S rRNA, where it nucleates assembly of the 50S subunit. In terms of biological role, one of the proteins that surrounds the polypeptide exit tunnel on the outside of the subunit. The polypeptide is Large ribosomal subunit protein uL24 (Methylorubrum extorquens (strain PA1) (Methylobacterium extorquens)).